The chain runs to 91 residues: CRISPR-associated endoribonuclease Cas2 2 (91 aa).

Aspartate 6 contributes to the Mg(2+) binding site.

Belongs to the CRISPR-associated endoribonuclease Cas2 protein family. In terms of assembly, homodimer, forms a heterotetramer with a Cas1 homodimer. It depends on Mg(2+) as a cofactor.

Functionally, CRISPR (clustered regularly interspaced short palindromic repeat), is an adaptive immune system that provides protection against mobile genetic elements (viruses, transposable elements and conjugative plasmids). CRISPR clusters contain sequences complementary to antecedent mobile elements and target invading nucleic acids. CRISPR clusters are transcribed and processed into CRISPR RNA (crRNA). Functions as a ssRNA-specific endoribonuclease. Involved in the integration of spacer DNA into the CRISPR cassette. This is CRISPR-associated endoribonuclease Cas2 2 from Moorella thermoacetica (strain ATCC 39073 / JCM 9320).